Reading from the N-terminus, the 381-residue chain is DNA repair protein RAD51 homolog 3 (381 aa).

The interval 1–24 is disordered; it reads MDEDINKDTNNNNNTTDSNNNNNN. The span at 8 to 24 shows a compositional bias: low complexity; it reads DTNNNNNTTDSNNNNNN. An ATP-binding site is contributed by 89 to 96; the sequence is GVPGIGKT. The tract at residues 313–381 is disordered; the sequence is GFNHPPPLNP…NDENEMYIEN (69 aa). A coiled-coil region spans residues 323-377; the sequence is EDQEQEKEKEKRKKKNNNNNNNNNNNNNNNNNNNNNNNNNNNNNNNNKNNDENEM. Low complexity predominate over residues 339-370; the sequence is NNNNNNNNNNNNNNNNNNNNNNNNNNNNNNNK.

It belongs to the RecA family. RAD51 subfamily.

Its subcellular location is the nucleus. Involved in the homologous recombination repair (HRR) pathway of double-stranded DNA breaks arising during DNA replication or induced by DNA-damaging agents. The protein is DNA repair protein RAD51 homolog 3 (rad51c) of Dictyostelium discoideum (Social amoeba).